We begin with the raw amino-acid sequence, 1547 residues long: Mediator of RNA polymerase II transcription subunit 12 (1547 aa).

Disordered stretches follow at residues 1-63 (MTSR…RPHI) and 1356-1509 (PVIP…QQRD). Over residues 1357–1369 (VIPPLEPPQPPNP) the composition is skewed to pro residues. Positions 1379–1390 (YQSPQMTSNTAA) are enriched in polar residues. 2 stretches are compositionally biased toward low complexity: residues 1398–1413 (QQQQ…QQTQ) and 1446–1468 (LSPL…RASQ). 2 stretches are compositionally biased toward polar residues: residues 1469 to 1480 (PSPIHSQRPTSV) and 1499 to 1509 (AHTSYVNQQRD).

The protein belongs to the Mediator complex subunit 12 family. In terms of assembly, component of the SRB8-11 complex, which itself associates with the Mediator complex.

It is found in the nucleus. Component of the SRB8-11 complex. The SRB8-11 complex is a regulatory module of the Mediator complex which is itself involved in regulation of basal and activated RNA polymerase II-dependent transcription. The SRB8-11 complex may be involved in the transcriptional repression of a subset of genes regulated by Mediator. It may inhibit the association of the Mediator complex with RNA polymerase II to form the holoenzyme complex. This chain is Mediator of RNA polymerase II transcription subunit 12 (SRB8), found in Phaeosphaeria nodorum (strain SN15 / ATCC MYA-4574 / FGSC 10173) (Glume blotch fungus).